Here is a 435-residue protein sequence, read N- to C-terminus: MNDTSIIILAAGLGTRMKSKRPKVLFELCGEPMIIHILKQAYAITNDVGVVLHYEKELISQKIKEIFPQTKIYTQDLENFPGTAGALKNATLSGKKVIVTCGDMPLVRSTDLMRLANADADIAMSCFEAANPFGYGRVIIKGGKVGAIVEQKDASEAELAIKSVNAGCYCFKREILEEILPLIKNKNTQKEFYLTDTIKIANERGFKCVAVNVSEQNFMGINDKFQLSVAEKIMQDEIKQDLMKAGVLMRLPESIFIDSRAKFEGECVLEENVSIMGACHIKESIIKSCSVIEDSVIEGSDIGPLAHIRPKSEIKNTHIGNFVEVKKGVLDGVKAGHLSYLGDCEIASGTNVGCGTITCNYDGKAKYKTTIGKNVFIGSDTQLVAPVNIADDVIIAAGSTITNDVPSGALAISRGKQENKAGFFYKFFGKNNAEK.

Residues 1-224 (MNDTSIIILA…EQNFMGINDK (224 aa)) form a pyrophosphorylase region. Residues 9-12 (LAAG), lysine 23, glutamine 75, and 82-83 (GT) each bind UDP-N-acetyl-alpha-D-glucosamine. A Mg(2+)-binding site is contributed by aspartate 103. UDP-N-acetyl-alpha-D-glucosamine contacts are provided by glycine 136, glutamate 150, asparagine 165, and asparagine 222. Asparagine 222 serves as a coordination point for Mg(2+). Residues 225 to 245 (FQLSVAEKIMQDEIKQDLMKA) form a linker region. Residues 246-435 (GVLMRLPESI…KFFGKNNAEK (190 aa)) are N-acetyltransferase. Positions 309 and 326 each coordinate UDP-N-acetyl-alpha-D-glucosamine. Catalysis depends on histidine 337, which acts as the Proton acceptor. The UDP-N-acetyl-alpha-D-glucosamine site is built by tyrosine 340 and asparagine 351. Residues 360-361 (NY), serine 379, alanine 397, and arginine 414 each bind acetyl-CoA.

In the N-terminal section; belongs to the N-acetylglucosamine-1-phosphate uridyltransferase family. It in the C-terminal section; belongs to the transferase hexapeptide repeat family. As to quaternary structure, homotrimer. Mg(2+) is required as a cofactor.

Its subcellular location is the cytoplasm. The catalysed reaction is alpha-D-glucosamine 1-phosphate + acetyl-CoA = N-acetyl-alpha-D-glucosamine 1-phosphate + CoA + H(+). The enzyme catalyses N-acetyl-alpha-D-glucosamine 1-phosphate + UTP + H(+) = UDP-N-acetyl-alpha-D-glucosamine + diphosphate. Its pathway is nucleotide-sugar biosynthesis; UDP-N-acetyl-alpha-D-glucosamine biosynthesis; N-acetyl-alpha-D-glucosamine 1-phosphate from alpha-D-glucosamine 6-phosphate (route II): step 2/2. It functions in the pathway nucleotide-sugar biosynthesis; UDP-N-acetyl-alpha-D-glucosamine biosynthesis; UDP-N-acetyl-alpha-D-glucosamine from N-acetyl-alpha-D-glucosamine 1-phosphate: step 1/1. The protein operates within bacterial outer membrane biogenesis; LPS lipid A biosynthesis. Its function is as follows. Catalyzes the last two sequential reactions in the de novo biosynthetic pathway for UDP-N-acetylglucosamine (UDP-GlcNAc). The C-terminal domain catalyzes the transfer of acetyl group from acetyl coenzyme A to glucosamine-1-phosphate (GlcN-1-P) to produce N-acetylglucosamine-1-phosphate (GlcNAc-1-P), which is converted into UDP-GlcNAc by the transfer of uridine 5-monophosphate (from uridine 5-triphosphate), a reaction catalyzed by the N-terminal domain. In Campylobacter curvus (strain 525.92), this protein is Bifunctional protein GlmU.